The chain runs to 478 residues: Zinc metalloproteinase/disintegrin (478 aa).

The N-terminal stretch at 1–20 (MIQVLLVTICLAAFPYQGSS) is a signal peptide. A propeptide spanning residues 21-187 (IILESGNVND…PIKKASDLNL (167 aa)) is cleaved from the precursor. Residues 193 to 389 (RYVELFIVVD…QKPQCILKKP (197 aa)) enclose the Peptidase M12B domain. Cystine bridges form between Cys304-Cys384, Cys344-Cys368, and Cys346-Cys351. His329 is a binding site for Zn(2+). Glu330 is an active-site residue. His333 and His339 together coordinate Zn(2+). The propeptide occupies 390 to 407 (LRTDTVSTPVSGNELLEA). The Disintegrin domain occupies 397-478 (TPVSGNELLE…ADCPRNGLYG (82 aa)). Disulfide bonds link Cys411-Cys426, Cys413-Cys421, Cys420-Cys443, Cys434-Cys440, Cys439-Cys464, and Cys452-Cys471. Positions 456 to 458 (MVD) match the Cell attachment site; atypical (MVD) motif.

The protein belongs to the venom metalloproteinase (M12B) family. P-II subfamily. P-IIa sub-subfamily. In terms of assembly, monomer (disintegrin). Zn(2+) serves as cofactor. As to expression, expressed by the venom gland.

Its subcellular location is the secreted. The catalysed reaction is Cleavage of 3-Asn-|-Gln-4, 9-Ser-|-His-10 and 14-Ala-|-Leu-15 bonds in insulin B chain and 14-Tyr-|-Gln-15 and 8-Thr-|-Ser-9 in A chain. Cleaves type IV collagen at 73-Ala-|-Gln-74 in alpha1-(IV) and at 7-Gly-|-Leu-8 in alpha2-(IV).. Snake venom zinc metalloproteinase that causes hemorrhage by provoking the degradation of the sub-endothelial matrix proteins (fibronectin, laminin, type IV collagen, nidogen, and gelatins). In terms of biological role, potent inhibitor of both collagen- (IC(50)=4 nM) and ADP-induced (IC(50)=8 nM) platelet aggregation. May act by binding to the platelet receptor GPIIb/GPIIIa (ITGA2B/ITGB3). This is Zinc metalloproteinase/disintegrin from Crotalus atrox (Western diamondback rattlesnake).